The sequence spans 649 residues: Endoplasmic reticulum chaperone BiP (649 aa).

A signal peptide spans 1 to 20; that stretch reads MGLSTYVGTFLLCILTLSHC. Residues 36–39, K96, 226–228, 292–299, and 363–366 each bind ATP; these read GTTY, GGT, EKAKRTLS, and GSTR. Residues 125-279 form a nucleotide-binding (NBD) region; sequence KPYMKVQVGS…KKKEGKDITK (155 aa). The interval 399-499 is substrate-binding (SBD); it reads VQAGVISGVE…PRGLPQIEVT (101 aa). A Prevents secretion from ER motif is present at residues 646 to 649; it reads KEEL.

It belongs to the heat shock protein 70 family.

The protein resides in the endoplasmic reticulum lumen. The catalysed reaction is ATP + H2O = ADP + phosphate + H(+). The chaperone activity is regulated by ATP-induced allosteric coupling of the nucleotide-binding (NBD) and substrate-binding (SBD) domains. In the ADP-bound and nucleotide-free (apo) states, the two domains have little interaction. In contrast, in the ATP-bound state the two domains are tightly coupled, which results in drastically accelerated kinetics in both binding and release of polypeptide substrates. J domain-containing co-chaperones stimulate the ATPase activity and are required for efficient substrate recognition. Its function is as follows. Endoplasmic reticulum chaperone that plays a key role in protein folding and quality control in the endoplasmic reticulum lumen. Involved in the correct folding of proteins and degradation of misfolded proteins. Acts as a key repressor of the unfolded protein response (UPR). The chain is Endoplasmic reticulum chaperone BiP from Echinococcus multilocularis (Fox tapeworm).